The following is a 154-amino-acid chain: Myoglobin (154 aa).

Residues 2–148 (VLSDGEWQLV…FRKDIAAKYK (147 aa)) enclose the Globin domain. Ser4 carries the phosphoserine modification. Residue His65 participates in nitrite binding. His65 is an O2 binding site. At Thr68 the chain carries Phosphothreonine. His94 serves as a coordination point for heme b.

It belongs to the globin family. Monomeric.

The protein localises to the cytoplasm. The protein resides in the sarcoplasm. It catalyses the reaction Fe(III)-heme b-[protein] + nitric oxide + H2O = Fe(II)-heme b-[protein] + nitrite + 2 H(+). The enzyme catalyses H2O2 + AH2 = A + 2 H2O. Functionally, monomeric heme protein which primary function is to store oxygen and facilitate its diffusion within muscle tissues. Reversibly binds oxygen through a pentacoordinated heme iron and enables its timely and efficient release as needed during periods of heightened demand. Depending on the oxidative conditions of tissues and cells, and in addition to its ability to bind oxygen, it also has a nitrite reductase activity whereby it regulates the production of bioactive nitric oxide. Under stress conditions, like hypoxia and anoxia, it also protects cells against reactive oxygen species thanks to its pseudoperoxidase activity. The polypeptide is Myoglobin (Balaena mysticetus (Bowhead whale)).